A 350-amino-acid chain; its full sequence is tRNA uridine(34) hydroxylase (350 aa).

The Rhodanese domain occupies 146–240 (DDPDALFIDM…YARKAREQGL (95 aa)). The active-site Cysteine persulfide intermediate is cysteine 200.

It belongs to the TrhO family.

The enzyme catalyses uridine(34) in tRNA + AH2 + O2 = 5-hydroxyuridine(34) in tRNA + A + H2O. Functionally, catalyzes oxygen-dependent 5-hydroxyuridine (ho5U) modification at position 34 in tRNAs, the first step in 5-carboxymethoxyuridine (cmo5U) biosynthesis. May be part of an alternate pathway, which is able to bypass cmo5U biogenesis in a subset of tRNAs under aerobic conditions. This chain is tRNA uridine(34) hydroxylase, found in Escherichia coli O45:K1 (strain S88 / ExPEC).